Reading from the N-terminus, the 554-residue chain is Potassium-transporting ATPase potassium-binding subunit (554 aa).

12 consecutive transmembrane segments (helical) span residues 1-21 (MSSQ…LALA), 59-79 (WPAY…FLYL), 131-151 (GLAV…VALV), 174-194 (VRIL…AGAI), 246-266 (PNPL…FALT), 279-299 (GYAI…LMMW), 323-343 (FGIA…TGAV), 352-372 (GFGG…PGGV), 375-395 (GLYG…LMVG), 412-432 (FAAC…AVAM), 481-501 (IGIA…ALAG), and 525-545 (GLLV…ALAL).

This sequence belongs to the KdpA family. In terms of assembly, the system is composed of three essential subunits: KdpA, KdpB and KdpC.

It localises to the cell membrane. Part of the high-affinity ATP-driven potassium transport (or Kdp) system, which catalyzes the hydrolysis of ATP coupled with the electrogenic transport of potassium into the cytoplasm. This subunit binds the extracellular potassium ions and delivers the ions to the membrane domain of KdpB through an intramembrane tunnel. This is Potassium-transporting ATPase potassium-binding subunit from Streptomyces griseus subsp. griseus (strain JCM 4626 / CBS 651.72 / NBRC 13350 / KCC S-0626 / ISP 5235).